We begin with the raw amino-acid sequence, 375 residues long: Probable butyrate kinase 2 (375 aa).

It belongs to the acetokinase family.

The protein localises to the cytoplasm. The catalysed reaction is butanoate + ATP = butanoyl phosphate + ADP. This Thermotoga maritima (strain ATCC 43589 / DSM 3109 / JCM 10099 / NBRC 100826 / MSB8) protein is Probable butyrate kinase 2.